The chain runs to 59 residues: Large ribosomal subunit protein bL32c (59 aa).

This sequence belongs to the bacterial ribosomal protein bL32 family.

Its subcellular location is the plastid. The protein resides in the chloroplast. In Physcomitrium patens (Spreading-leaved earth moss), this protein is Large ribosomal subunit protein bL32c.